The primary structure comprises 431 residues: Glucose-1-phosphate adenylyltransferase (431 aa).

Lysine 39 is a beta-D-fructose 1,6-bisphosphate binding site. Positions 40, 46, and 52 each coordinate AMP. Residue tyrosine 114 coordinates alpha-D-glucose 1-phosphate. Arginine 130 is an AMP binding site. Alpha-D-glucose 1-phosphate contacts are provided by residues glycine 179, glutamate 194 to lysine 195, and serine 212. Residue arginine 386 participates in AMP binding. Residue glutamine 429–arginine 431 participates in beta-D-fructose 1,6-bisphosphate binding.

Belongs to the bacterial/plant glucose-1-phosphate adenylyltransferase family. Homotetramer.

It carries out the reaction alpha-D-glucose 1-phosphate + ATP + H(+) = ADP-alpha-D-glucose + diphosphate. It participates in glycan biosynthesis; glycogen biosynthesis. Its activity is regulated as follows. Allosterically activated by fructose-1,6-bisphosphate (F16BP) and inhibited by AMP. In terms of biological role, involved in the biosynthesis of ADP-glucose, a building block required for the elongation reactions to produce glycogen. Catalyzes the reaction between ATP and alpha-D-glucose 1-phosphate (G1P) to produce pyrophosphate and ADP-Glc. This Klebsiella pneumoniae (strain 342) protein is Glucose-1-phosphate adenylyltransferase.